Consider the following 741-residue polypeptide: Multifunctional procollagen lysine hydroxylase and glycosyltransferase LH3 (741 aa).

An N-terminal signal peptide occupies residues 1–27 (MAASVPEPRLLLLLLLLLPPLPPVTSA). Residues 28-293 (SDRPRGANPV…FCNLNRRTLP (266 aa)) are required for glycosyltransferase activity. Position 47–49 (47–49 (VAT)) interacts with UDP. Asparagine 66 carries N-linked (GlcNAc...) asparagine glycosylation. Mn(2+)-binding residues include aspartate 115, aspartate 118, and histidine 256. A UDP-binding site is contributed by 115 to 117 (DSY). 259-262 (GPTK) lines the UDP pocket. 2 disulfide bridges follow: cysteine 282–cysteine 285 and cysteine 382–cysteine 388. The interval 298–523 (PPRVLLAVFV…EFGRLLSTSH (226 aa)) is accessory region. A glycan (N-linked (GlcNAc...) asparagine) is linked at asparagine 551. A disulfide bridge connects residues cysteine 566 and cysteine 701. Positions 602 and 659 each coordinate 2-oxoglutarate. One can recognise a Fe2OG dioxygenase domain in the interval 650-741 (RAVMNFVVRY…RYIMVSFVDP (92 aa)). Histidine 670 and aspartate 672 together coordinate Fe cation. An important for dimerization region spans residues 675-718 (TFTLNVALNHKGVDYEGGGCRFLRYDCRVSSPRKGWALLHPGRL). Asparagine 679 contributes to the 2-oxoglutarate binding site. Histidine 722 serves as a coordination point for Fe cation. Arginine 732 provides a ligand contact to 2-oxoglutarate.

Homodimer. It depends on Fe(2+) as a cofactor. L-ascorbate is required as a cofactor. Mn(2+) serves as cofactor. In terms of tissue distribution, detected in heart and bone.

It is found in the rough endoplasmic reticulum. The protein resides in the endoplasmic reticulum lumen. It localises to the endoplasmic reticulum membrane. The protein localises to the secreted. Its subcellular location is the extracellular space. It carries out the reaction L-lysyl-[collagen] + 2-oxoglutarate + O2 = (5R)-5-hydroxy-L-lysyl-[collagen] + succinate + CO2. The catalysed reaction is (5R)-5-hydroxy-L-lysyl-[collagen] + UDP-alpha-D-galactose = (5R)-5-O-(beta-D-galactosyl)-5-hydroxy-L-lysyl-[collagen] + UDP + H(+). It catalyses the reaction (5R)-5-O-(beta-D-galactosyl)-5-hydroxy-L-lysyl-[collagen] + UDP-alpha-D-glucose = (5R)-5-O-[alpha-D-glucosyl-(1-&gt;2)-beta-D-galactosyl]-5-hydroxy-L-lysyl-[collagen] + UDP + H(+). Multifunctional enzyme that catalyzes a series of post-translational modifications on Lys residues in procollagen. Plays a redundant role in catalyzing the formation of hydroxylysine residues in -Xaa-Lys-Gly- sequences in collagens. Plays a redundant role in catalyzing the transfer of galactose onto hydroxylysine groups, giving rise to galactosyl 5-hydroxylysine. Has an essential role by catalyzing the subsequent transfer of glucose moieties, giving rise to 1,2-glucosylgalactosyl-5-hydroxylysine residues. Catalyzes hydroxylation and glycosylation of Lys residues in the MBL1 collagen-like domain, giving rise to hydroxylysine and 1,2-glucosylgalactosyl-5-hydroxylysine residues. Catalyzes hydroxylation and glycosylation of Lys residues in the ADIPOQ collagen-like domain, giving rise to hydroxylysine and 1,2-glucosylgalactosyl-5-hydroxylysine residues. Essential for normal biosynthesis and secretion of type IV collagens. Essential for normal formation of basement membranes. This chain is Multifunctional procollagen lysine hydroxylase and glycosyltransferase LH3 (Plod3), found in Rattus norvegicus (Rat).